The primary structure comprises 138 residues: Histone H2B.4 (138 aa).

The segment covering 1–39 has biased composition (basic and acidic residues); sequence MAPKAAEKKPAEKKPAGKAPAEKLPKAEKKISKDAGGSE. The disordered stretch occupies residues 1–48; that stretch reads MAPKAAEKKPAEKKPAGKAPAEKLPKAEKKISKDAGGSEKKKKKSKKS. Alanine 2 bears the N,N,N-trimethylalanine; alternate mark. Alanine 2 bears the N,N-dimethylalanine; alternate mark. Alanine 2 carries the post-translational modification N-methylalanine; alternate. An N6-methyllysine modification is found at lysine 4. Residues lysine 8 and lysine 13 each carry the N6-acetyllysine modification. An N6,N6-dimethyllysine modification is found at lysine 14. Residues lysine 18, lysine 23, lysine 29, and lysine 30 each carry the N6-acetyllysine modification. A Glycyl lysine isopeptide (Lys-Gly) (interchain with G-Cter in ubiquitin) cross-link involves residue lysine 135.

Belongs to the histone H2B family. In terms of assembly, the nucleosome is a histone octamer containing two molecules each of H2A, H2B, H3 and H4 assembled in one H3-H4 heterotetramer and two H2A-H2B heterodimers. The octamer wraps approximately 147 bp of DNA. Can be acetylated to form H2BK6ac, H2BK33ac and H2BK34ac. Post-translationally, monoubiquitinated by BRE1 to form H2BK143ub1 and deubiquitinated by UBP26. Required for heterochromatic histone H3 di- and trimethylation at H3K4me. May give a specific tag for epigenetic transcriptional activation.

It is found in the nucleus. It localises to the chromosome. Functionally, core component of nucleosome. Nucleosomes wrap and compact DNA into chromatin, limiting DNA accessibility to the cellular machineries which require DNA as a template. Histones thereby play a central role in transcription regulation, DNA repair, DNA replication and chromosomal stability. DNA accessibility is regulated via a complex set of post-translational modifications of histones, also called histone code, and nucleosome remodeling. This is Histone H2B.4 from Arabidopsis thaliana (Mouse-ear cress).